A 251-amino-acid chain; its full sequence is Insulin-induced gene 1 protein (251 aa).

Residues 1–58 lie on the Cytoplasmic side of the membrane; the sequence is MPRLEEHCWSCSCSTSVKTKDLSSAGWIVCKTGEMMSIITSVLSHAYGSLHSLQSANL. A helical transmembrane segment spans residues 59-81; that stretch reads IRRGLVLFIVGVVLALVLNLLQI. Topologically, residues 82 to 100 are extracellular; sequence QRNVTLFPEEVLDTLFSSA. Residues 101 to 118 form a helical membrane-spanning segment; it reads WWIPLCCGTAAAVVGLLY. At 119–133 the chain is on the cytoplasmic side; it reads PCLDHHLGEPHKFKR. A helical transmembrane segment spans residues 134 to 156; it reads EWASVMRCIAVFVGINHASAKLD. Topologically, residues 157–159 are extracellular; the sequence is FAN. The chain crosses the membrane as a helical span at residues 160-178; sequence NVQLSLTLAALSLGLWWTF. Topologically, residues 179-183 are cytoplasmic; it reads DRSRS. The helical transmembrane segment at 184-205 threads the bilayer; it reads GFGLGLTTALLATLIAQLLVYN. Residues 206–219 lie on the Extracellular side of the membrane; the sequence is GIYQYTSPDFLYVR. The chain crosses the membrane as a helical span at residues 220 to 237; sequence SWLPCIFFSGGVTVGNIG. Topologically, residues 238–251 are cytoplasmic; that stretch reads RQLAMGSTEKIHND. A KxHxx motif is present at residues 245-251; that stretch reads TEKIHND.

The protein belongs to the INSIG family. In terms of assembly, interacts with scap; interaction is direct and only takes place in the presence of sterols; it prevents interaction between scap and the coat protein complex II (COPII). Associates with the SCAP-SREBP complex; association is mediated via its interaction with scap and only takes place in the presence of sterols.

The protein localises to the endoplasmic reticulum membrane. Oxysterol-binding protein that mediates feedback control of cholesterol synthesis by controlling both endoplasmic reticulum to Golgi transport of scap and degradation of hmgcr. Acts as a negative regulator of cholesterol biosynthesis by mediating the retention of the SCAP-SREBP complex in the endoplasmic reticulum, thereby blocking the processing of sterol regulatory element-binding proteins (SREBPs). Binds oxysterol, including 25-hydroxycholesterol, regulating interaction with scap and retention of the SCAP-SREBP complex in the endoplasmic reticulum. In presence of oxysterol, interacts with scap, retaining the SCAP-SREBP complex in the endoplasmic reticulum, thereby preventing scap from escorting SREBPs to the Golgi. Sterol deprivation reduces oxysterol-binding, disrupting the interaction between insig1 and scap, thereby promoting Golgi transport of the SCAP-SREBP complex, followed by processing and nuclear translocation of SREBPs. Also regulates cholesterol synthesis by regulating degradation of hmgcr. This Danio rerio (Zebrafish) protein is Insulin-induced gene 1 protein.